Reading from the N-terminus, the 61-residue chain is Large ribosomal subunit protein uL30 (61 aa).

It belongs to the universal ribosomal protein uL30 family. As to quaternary structure, part of the 50S ribosomal subunit.

This is Large ribosomal subunit protein uL30 from Bordetella petrii (strain ATCC BAA-461 / DSM 12804 / CCUG 43448).